The sequence spans 86 residues: Small ribosomal subunit protein uS15 (86 aa).

The protein belongs to the universal ribosomal protein uS15 family. As to quaternary structure, part of the 30S ribosomal subunit. Forms a bridge to the 50S subunit in the 70S ribosome, contacting the 23S rRNA.

Functionally, one of the primary rRNA binding proteins, it binds directly to 16S rRNA where it helps nucleate assembly of the platform of the 30S subunit by binding and bridging several RNA helices of the 16S rRNA. Forms an intersubunit bridge (bridge B4) with the 23S rRNA of the 50S subunit in the ribosome. In Ruthia magnifica subsp. Calyptogena magnifica, this protein is Small ribosomal subunit protein uS15.